The following is a 367-amino-acid chain: 2-aminoethylphosphonate--pyruvate transaminase (367 aa).

Pyridoxal 5'-phosphate is bound by residues 65–67 (SGS), tyrosine 92, threonine 143, and aspartate 168. Lysine 194 carries the N6-(pyridoxal phosphate)lysine modification. Threonine 243 contacts pyridoxal 5'-phosphate.

Belongs to the class-V pyridoxal-phosphate-dependent aminotransferase family. PhnW subfamily. Homodimer. The cofactor is pyridoxal 5'-phosphate.

It carries out the reaction (2-aminoethyl)phosphonate + pyruvate = phosphonoacetaldehyde + L-alanine. Involved in phosphonate degradation. This chain is 2-aminoethylphosphonate--pyruvate transaminase (phnW), found in Salmonella typhimurium (strain LT2 / SGSC1412 / ATCC 700720).